We begin with the raw amino-acid sequence, 1088 residues long: DNA damage-binding protein 1a (1088 aa).

The protein belongs to the DDB1 family. Component of the CDD complex, at least composed of COP10, DET1 and DDB1A. Component of the CUL4-RBX1-CDD complex. Component of the CUL4-RBX1-DDB1-PRL1 E3 ubiquitin-protein ligase complex. Component of the UV-DDB complex, which is composed of DDB1A and DDB2. Interacts with RAE1. Interacts with WDR55. Interacts with ATCSA-1. Interacts with DDA1. Binds to ASG2; the subcellular localization of this complex depends on ASG2 farnesylation status. Binds to KTN80.2/DWA3. Interacts with HTD1. Interacts directly with DHU1.

Its subcellular location is the cytoplasm. The protein localises to the nucleus. It functions in the pathway protein modification; protein ubiquitination. Component of light signal transduction machinery. Involved in repression of photomorphogenesis in darkness by participating in the CDD complex, a complex probably required to regulate the activity of ubiquitin conjugating enzymes (E2s). Repression of photomorphogenesis is probably mediated by ubiquitination and subsequent degradation of photomorphogenesis-promoting factors such as HY5, HYH and LAF1. Plays a role in DNA repair by forming with DDB2 the UV-damaged DNA-binding protein complex (UV-DDB). Component of the CUL4-RBX1-DDB1-PRL1 E3 ubiquitin-protein ligase complex. The protein is DNA damage-binding protein 1a of Arabidopsis thaliana (Mouse-ear cress).